A 1214-amino-acid polypeptide reads, in one-letter code: Inner capsid protein VP3 (1214 aa).

The disordered stretch occupies residues 1 to 80; sequence MPRRSARKAQ…SVNNDGDIIT (80 aa). A compositionally biased stretch (polar residues) spans 8–18; that stretch reads KAQSATASPAD. Positions 28-51 are enriched in low complexity; it reads PTTNSPPSTTSPNQAAADANQQQA. A C2H2-type zinc finger spans residues 117–140; that stretch reads YVCNVCNARFSTMSALSEHLRSDH.

Belongs to the turreted BTV-fold inner capsid family. As to quaternary structure, homodecamer; each decamer is made up of two conformers of VP2, called VP2A and VP2B. 12 homodecamers assemble to form an icosahedral capsid. Interacts with VP6.

It is found in the virion. In terms of biological role, inner capsid protein that self-assembles to form an icosahedral capsid with a T=2 symmetry, which consists of 120 copies of VP2, with channels at each of its five-fold vertices. This capsid constitutes the innermost concentric layer of the viral mature particle. The polypeptide is Inner capsid protein VP3 (S3) (Notemigonus crysoleucas (Golden shiner)).